Consider the following 145-residue polypeptide: Large ribosomal subunit protein uL15 (145 aa).

Basic residues-rich tracts occupy residues 1–13 (MIRKTKKIRKQRG) and 22–33 (TKKRRGAGHRGG). Residues 1-41 (MIRKTKKIRKQRGSRSVGGGCTKKRRGAGHRGGRGQAGGNK) form a disordered region.

It belongs to the universal ribosomal protein uL15 family. In terms of assembly, part of the 50S ribosomal subunit.

In terms of biological role, binds to the 23S rRNA. This chain is Large ribosomal subunit protein uL15, found in Methanosphaera stadtmanae (strain ATCC 43021 / DSM 3091 / JCM 11832 / MCB-3).